A 228-amino-acid polypeptide reads, in one-letter code: MPDPSDRKAVTRYLEQTHDKIFESNRAWVASKKGADPEFFNKLAAGQSPEYLYIGCSDSRVPANEIMGLDAGEVFVHRNIANVVPTIDLSSMSVINYAVGHLKVKHIVVCGHYNCGGVQAALTPTDLGILNPWLRNIRDVYRLHEKELDAIEDDGERFNRLVELNVIESCRSVIKTAVVQQSYEENGFPIVHGWVFNLKDGLLKDLNIDFPGILADIQKIYNLTKGSS.

Zn(2+) contacts are provided by Cys-56, Asp-58, His-112, and Cys-115.

Belongs to the beta-class carbonic anhydrase family. Requires Zn(2+) as cofactor.

It carries out the reaction hydrogencarbonate + H(+) = CO2 + H2O. Its function is as follows. Catalyzes the reversible hydration of CO(2) to H(2)CO(3). The main role may be to provide inorganic carbon for the bicarbonate-dependent carboxylation reactions catalyzed by pyruvate carboxylase, acetyl-CoA carboxylase and carbamoyl-phosphate synthetase. Involved in osmoadaptation. The sequence is that of Carbonic anhydrase from Emericella nidulans (strain FGSC A4 / ATCC 38163 / CBS 112.46 / NRRL 194 / M139) (Aspergillus nidulans).